Here is a 360-residue protein sequence, read N- to C-terminus: uncharacterized protein (360 aa).

The 4Fe-4S ferredoxin-type domain occupies 11–40; sequence KEEVWDTNRCSGCGACVAVCPVNNLYFREE.

Belongs to the FrhB family.

This is an uncharacterized protein from Methanocaldococcus jannaschii (strain ATCC 43067 / DSM 2661 / JAL-1 / JCM 10045 / NBRC 100440) (Methanococcus jannaschii).